We begin with the raw amino-acid sequence, 360 residues long: RGG repeats nuclear RNA binding protein B (360 aa).

2 disordered regions span residues 1–216 (MASV…DKEM) and 250–360 (MQQL…TLGK). Ala-2 is modified (N-acetylalanine). Residues 58–77 (PGGGRGAGRGGSYGRGGRGG) are compositionally biased toward gly residues. Basic and acidic residues-rich tracts occupy residues 99 to 108 (RRSEEGDGAR) and 132 to 157 (DSER…RDGA). The span at 162–176 (WGTTQDDITPVTEES) shows a compositional bias: polar residues. Composition is skewed to basic and acidic residues over residues 184 to 216 (LTVE…DKEM), 258 to 283 (SNND…EKTR), and 311 to 336 (REGR…RNQR). One can recognise an FF domain in the interval 223–288 (KVLEEKKKAL…EEKTRKSLSI (66 aa)). Ser-258 is modified (phosphoserine).

This sequence belongs to the SERBP1-HABP4 family.

Its subcellular location is the nucleus. It localises to the cytoplasm. It is found in the perinuclear region. Functionally, ribosome-binding protein that acts as a regulator of mRNA translation by promoting ribosome inactivation. Binds RNA. The sequence is that of RGG repeats nuclear RNA binding protein B from Arabidopsis thaliana (Mouse-ear cress).